The following is a 484-amino-acid chain: Transcription factor cghD (484 aa).

The segment at residues 21–54 (CDRCRLQKLKCTVQSMESDGRMVCERCVRAKVPC) is a DNA-binding region (zn(2)-C6 fungal-type). Disordered stretches follow at residues 59 to 117 (RRRA…PTLA), 136 to 174 (TTAP…SGSS), 202 to 242 (PAST…FSTT), and 386 to 406 (HMHS…ELPS). The segment covering 64–76 (RPSDTKKQGDSST) has biased composition (basic and acidic residues). Low complexity predominate over residues 77-107 (RRSTAPRTTNPEPTVLTPPLSTTSSTSEQTL). The segment covering 202–213 (PASTSTSTGSPT) has biased composition (low complexity).

It localises to the nucleus. Functionally, transcription factor that regulates the expression of the gene cluster that mediates the biosynthesis of the tetramic acid Sch210972, a potential anti-HIV fungal natural product that contains a decalin core. The polypeptide is Transcription factor cghD (Chaetomium globosum (strain ATCC 6205 / CBS 148.51 / DSM 1962 / NBRC 6347 / NRRL 1970) (Soil fungus)).